Reading from the N-terminus, the 209-residue chain is Kynurenine formamidase (209 aa).

Trp-20 contacts substrate. Positions 50, 54, and 56 each coordinate Zn(2+). His-60 functions as the Proton donor/acceptor in the catalytic mechanism. Zn(2+)-binding residues include His-161 and Glu-173.

The protein belongs to the Cyclase 1 superfamily. KynB family. As to quaternary structure, homodimer. It depends on Zn(2+) as a cofactor.

It carries out the reaction N-formyl-L-kynurenine + H2O = L-kynurenine + formate + H(+). The protein operates within amino-acid degradation; L-tryptophan degradation via kynurenine pathway; L-kynurenine from L-tryptophan: step 2/2. Functionally, catalyzes the hydrolysis of N-formyl-L-kynurenine to L-kynurenine, the second step in the kynurenine pathway of tryptophan degradation. The chain is Kynurenine formamidase from Bacillus cereus (strain ATCC 14579 / DSM 31 / CCUG 7414 / JCM 2152 / NBRC 15305 / NCIMB 9373 / NCTC 2599 / NRRL B-3711).